Consider the following 508-residue polypeptide: Citrate lyase alpha chain (508 aa).

Oligomer with a subunit composition of (alpha,beta,gamma)6.

It localises to the cytoplasm. It carries out the reaction citrate = oxaloacetate + acetate. The catalysed reaction is citrate + acetyl-CoA = (3S)-citryl-CoA + acetate. Represents a citrate:acetyl-ACP transferase. In Klebsiella pneumoniae, this protein is Citrate lyase alpha chain (citF).